Consider the following 513-residue polypeptide: 2-isopropylmalate synthase (513 aa).

A Pyruvate carboxyltransferase domain is found at 4–266 (IEFFDTSLRD…QSPLKLSETA (263 aa)). Mn(2+) contacts are provided by D13, H201, H203, and N237. A regulatory domain region spans residues 390–513 (ILDNVQIDGH…VEQISAHDGI (124 aa)).

It belongs to the alpha-IPM synthase/homocitrate synthase family. LeuA type 1 subfamily. Homodimer. It depends on Mn(2+) as a cofactor.

It is found in the cytoplasm. The catalysed reaction is 3-methyl-2-oxobutanoate + acetyl-CoA + H2O = (2S)-2-isopropylmalate + CoA + H(+). It participates in amino-acid biosynthesis; L-leucine biosynthesis; L-leucine from 3-methyl-2-oxobutanoate: step 1/4. Its function is as follows. Catalyzes the condensation of the acetyl group of acetyl-CoA with 3-methyl-2-oxobutanoate (2-ketoisovalerate) to form 3-carboxy-3-hydroxy-4-methylpentanoate (2-isopropylmalate). The protein is 2-isopropylmalate synthase of Lactococcus lactis subsp. lactis (strain IL1403) (Streptococcus lactis).